Reading from the N-terminus, the 95-residue chain is uncharacterized protein (95 aa).

Residues 1–21 form the signal peptide; it reads MKKITLFFTALLCLFSTSVLA.

This is an uncharacterized protein from Haemophilus influenzae (strain ATCC 51907 / DSM 11121 / KW20 / Rd).